Here is a 499-residue protein sequence, read N- to C-terminus: Glycerol kinase (499 aa).

Thr-13 is an ADP binding site. Thr-13, Thr-14, and Ser-15 together coordinate ATP. Residue Thr-13 coordinates sn-glycerol 3-phosphate. Arg-17 contributes to the ADP binding site. Sn-glycerol 3-phosphate is bound by residues Arg-83, Glu-84, Tyr-135, and Asp-244. Residues Arg-83, Glu-84, Tyr-135, Asp-244, and Gln-245 each contribute to the glycerol site. Thr-266 and Gly-310 together coordinate ADP. Positions 266, 310, 314, and 411 each coordinate ATP. The ADP site is built by Gly-411 and Asn-415.

It belongs to the FGGY kinase family.

It catalyses the reaction glycerol + ATP = sn-glycerol 3-phosphate + ADP + H(+). Its pathway is polyol metabolism; glycerol degradation via glycerol kinase pathway; sn-glycerol 3-phosphate from glycerol: step 1/1. Inhibited by fructose 1,6-bisphosphate (FBP). In terms of biological role, key enzyme in the regulation of glycerol uptake and metabolism. Catalyzes the phosphorylation of glycerol to yield sn-glycerol 3-phosphate. The sequence is that of Glycerol kinase from Pseudothermotoga lettingae (strain ATCC BAA-301 / DSM 14385 / NBRC 107922 / TMO) (Thermotoga lettingae).